We begin with the raw amino-acid sequence, 261 residues long: Hydroxyethylthiazole kinase (261 aa).

Met45 lines the substrate pocket. ATP is bound by residues Arg121 and Ser167. Gly194 lines the substrate pocket.

It belongs to the Thz kinase family. The cofactor is Mg(2+).

The catalysed reaction is 5-(2-hydroxyethyl)-4-methylthiazole + ATP = 4-methyl-5-(2-phosphooxyethyl)-thiazole + ADP + H(+). It participates in cofactor biosynthesis; thiamine diphosphate biosynthesis; 4-methyl-5-(2-phosphoethyl)-thiazole from 5-(2-hydroxyethyl)-4-methylthiazole: step 1/1. Catalyzes the phosphorylation of the hydroxyl group of 4-methyl-5-beta-hydroxyethylthiazole (THZ). This Vibrio atlanticus (strain LGP32) (Vibrio splendidus (strain Mel32)) protein is Hydroxyethylthiazole kinase.